The sequence spans 342 residues: S-adenosylmethionine:tRNA ribosyltransferase-isomerase (342 aa).

It belongs to the QueA family. Monomer.

Its subcellular location is the cytoplasm. The catalysed reaction is 7-aminomethyl-7-carbaguanosine(34) in tRNA + S-adenosyl-L-methionine = epoxyqueuosine(34) in tRNA + adenine + L-methionine + 2 H(+). It functions in the pathway tRNA modification; tRNA-queuosine biosynthesis. Transfers and isomerizes the ribose moiety from AdoMet to the 7-aminomethyl group of 7-deazaguanine (preQ1-tRNA) to give epoxyqueuosine (oQ-tRNA). This Streptococcus pneumoniae (strain ATCC BAA-255 / R6) protein is S-adenosylmethionine:tRNA ribosyltransferase-isomerase.